Here is a 299-residue protein sequence, read N- to C-terminus: Protoheme IX farnesyltransferase (299 aa).

8 helical membrane-spanning segments follow: residues 24-44 (VVALMMLTAVVGMLLASDQGM), 46-66 (WNALILGNLGIALLASSAAAI), 94-114 (VHALTFAFSLAVVGMAILAWG), 118-138 (LTAWLTLASLIGYAVVYTLFL), 146-166 (IVLGGLAGAAPPLLGWTSVTG), 172-192 (ALLLVLIIFAWTPPHFWALAV), 232-252 (LPFITGMCGWIYFVAALALGV), and 278-298 (ITYLMLLFVALLADHYIPVTL).

It belongs to the UbiA prenyltransferase family. Protoheme IX farnesyltransferase subfamily.

Its subcellular location is the cell inner membrane. It carries out the reaction heme b + (2E,6E)-farnesyl diphosphate + H2O = Fe(II)-heme o + diphosphate. Its pathway is porphyrin-containing compound metabolism; heme O biosynthesis; heme O from protoheme: step 1/1. Functionally, converts heme B (protoheme IX) to heme O by substitution of the vinyl group on carbon 2 of heme B porphyrin ring with a hydroxyethyl farnesyl side group. The protein is Protoheme IX farnesyltransferase of Hahella chejuensis (strain KCTC 2396).